Consider the following 486-residue polypeptide: Iron-sulfur cluster assembly SufBD family protein ycf24 (486 aa).

It belongs to the iron-sulfur cluster assembly SufBD family.

It localises to the plastid. It is found in the chloroplast. This chain is Iron-sulfur cluster assembly SufBD family protein ycf24 (ycf24), found in Trieres chinensis (Marine centric diatom).